Here is a 462-residue protein sequence, read N- to C-terminus: Phosphoglucosamine mutase (462 aa).

Serine 112 serves as the catalytic Phosphoserine intermediate. 4 residues coordinate Mg(2+): serine 112, aspartate 250, aspartate 252, and aspartate 254. The residue at position 112 (serine 112) is a Phosphoserine.

It belongs to the phosphohexose mutase family. The cofactor is Mg(2+). Post-translationally, activated by phosphorylation.

It catalyses the reaction alpha-D-glucosamine 1-phosphate = D-glucosamine 6-phosphate. In terms of biological role, catalyzes the conversion of glucosamine-6-phosphate to glucosamine-1-phosphate. This Parasynechococcus marenigrum (strain WH8102) protein is Phosphoglucosamine mutase.